The following is a 357-amino-acid chain: Heat-inducible transcription repressor HrcA (357 aa).

It belongs to the HrcA family.

Functionally, negative regulator of class I heat shock genes (grpE-dnaK-dnaJ and groELS operons). Prevents heat-shock induction of these operons. The polypeptide is Heat-inducible transcription repressor HrcA (Chlorobium phaeobacteroides (strain DSM 266 / SMG 266 / 2430)).